The following is a 126-amino-acid chain: Large ribosomal subunit protein bL12 (126 aa).

This sequence belongs to the bacterial ribosomal protein bL12 family. As to quaternary structure, homodimer. Part of the ribosomal stalk of the 50S ribosomal subunit. Forms a multimeric L10(L12)X complex, where L10 forms an elongated spine to which 2 to 4 L12 dimers bind in a sequential fashion. Binds GTP-bound translation factors.

In terms of biological role, forms part of the ribosomal stalk which helps the ribosome interact with GTP-bound translation factors. Is thus essential for accurate translation. This chain is Large ribosomal subunit protein bL12, found in Francisella tularensis subsp. mediasiatica (strain FSC147).